The following is a 649-amino-acid chain: MSGVSELLLPSPVPQGVEGVLHGLHGRWRGRAAHRRRLMQLAEQAERRCMALLGLPETQLQQQLLEIQSRFRRRLLTDDETLLAGVALVGELAWRAVQKRPYRVQFMGALAMHRGWLAEMATGEGKTLTVAVAAVLAGWSGRACHVISANDYLTERDAQQMTPLYEACGVTVASGGGALSPEERQLCYKADVVYVTAKTLLADYLRDQLATRQGAGRAQQGFAQWLTGGAQQPSAMMLGRGLHTVIIDEADSVLIDEAVTPLILAAPQKIPGMHGAVMWAAEVAERLHEEEDYTADRRTRQIQLLEGANQLMAAMAWRLDAVWRSEVRRQELVRHALSVRHFIRVGQHYLVQEDKVVLLDDATGRMTPERSLTAGLHQAIEAYEGVPLTDPNASMGQMSFQTFFRRFHRFCGTTGTARESTRELWRIYRLAVLPIPTHRPRQTVVHPTRVYATLEDKWQAVAAEVAQVHASGRPVLVGVRSVSSSEQLAAVLVEKGLSAQVLNARNHAEEAAIVSRAGQSGHVTIATNMAGRGTDIGLEEQTRSLGGLHVIIAECNSSARIDRQLAGRCGRQGDPGSVVTLLCLEEDVLRQQLSPALLGIARSLPRWGWAAGVLAGLVHYAQRRSEAQAYGQRRAVMQGDEWLNNALPF.

ATP-binding positions include Gln-105, 123-127 (GEGKT), and Asp-535.

The protein belongs to the SecA family. Monomer and homodimer. Part of the essential Sec protein translocation apparatus which comprises SecA, SecYEG and auxiliary proteins SecDF-YajC and YidC.

It localises to the cell inner membrane. Its subcellular location is the cytoplasm. It catalyses the reaction ATP + H2O + cellular proteinSide 1 = ADP + phosphate + cellular proteinSide 2.. Part of the Sec protein translocase complex. Interacts with the SecYEG preprotein conducting channel. Has a central role in coupling the hydrolysis of ATP to the transfer of proteins into and across the cell membrane, serving both as a receptor for the preprotein-SecB complex and as an ATP-driven molecular motor driving the stepwise translocation of polypeptide chains across the membrane. The protein is Protein translocase subunit SecA 2 of Magnetococcus marinus (strain ATCC BAA-1437 / JCM 17883 / MC-1).